We begin with the raw amino-acid sequence, 201 residues long: Endoribonuclease YbeY (201 aa).

The Zn(2+) site is built by histidine 156, histidine 160, and histidine 166.

The protein belongs to the endoribonuclease YbeY family. It depends on Zn(2+) as a cofactor.

It is found in the cytoplasm. Its function is as follows. Single strand-specific metallo-endoribonuclease involved in late-stage 70S ribosome quality control and in maturation of the 3' terminus of the 16S rRNA. The protein is Endoribonuclease YbeY of Cupriavidus pinatubonensis (strain JMP 134 / LMG 1197) (Cupriavidus necator (strain JMP 134)).